The chain runs to 407 residues: Phosphopentomutase (407 aa).

6 residues coordinate Mn(2+): Asp-10, Asp-306, His-311, Asp-347, His-348, and His-359.

The protein belongs to the phosphopentomutase family. Requires Mn(2+) as cofactor.

It is found in the cytoplasm. It catalyses the reaction 2-deoxy-alpha-D-ribose 1-phosphate = 2-deoxy-D-ribose 5-phosphate. The enzyme catalyses alpha-D-ribose 1-phosphate = D-ribose 5-phosphate. It functions in the pathway carbohydrate degradation; 2-deoxy-D-ribose 1-phosphate degradation; D-glyceraldehyde 3-phosphate and acetaldehyde from 2-deoxy-alpha-D-ribose 1-phosphate: step 1/2. Its function is as follows. Isomerase that catalyzes the conversion of deoxy-ribose 1-phosphate (dRib-1-P) and ribose 1-phosphate (Rib-1-P) to deoxy-ribose 5-phosphate (dRib-5-P) and ribose 5-phosphate (Rib-5-P), respectively. The polypeptide is Phosphopentomutase (Erwinia tasmaniensis (strain DSM 17950 / CFBP 7177 / CIP 109463 / NCPPB 4357 / Et1/99)).